Reading from the N-terminus, the 37-residue chain is Large ribosomal subunit protein bL36 (37 aa).

This sequence belongs to the bacterial ribosomal protein bL36 family.

The protein is Large ribosomal subunit protein bL36 of Histophilus somni (strain 129Pt) (Haemophilus somnus).